Reading from the N-terminus, the 971-residue chain is Nitrogen regulatory protein areA (971 aa).

Disordered stretches follow at residues 39-61 (IHNA…DASA), 146-169 (HKEE…DAGS), 262-307 (QPAH…VNST), 390-416 (SASM…NVST), and 587-691 (DNNG…GNAP). Over residues 42-59 (APTQRTXNSNRIPNSRDA) the composition is skewed to polar residues. Positions 146–159 (HKEEQQQRQDEADA) are enriched in basic and acidic residues. Composition is skewed to polar residues over residues 262-274 (QPAH…SEFN) and 297-307 (FSPQVPAVNST). A compositionally biased stretch (low complexity) spans 390-400 (SASMSNNNNNS). 2 stretches are compositionally biased toward polar residues: residues 597–606 (LERSQSQSFR) and 632–645 (NGFE…QSSP). Composition is skewed to low complexity over residues 654-663 (SGFSSVAPSR) and 680-691 (AAAGNGNDGNAP). The GATA-type zinc-finger motif lies at 694 to 718 (CTNCFTQTTPLWRRNPEGQPLCNAC). The tract at residues 742–918 (NRGSGTNVPV…PFGSSAGLSS (177 aa)) is disordered. Residues 744 to 794 (GSGTNVPVGGSSTRSKKTASTLNSRKNSTLSMSTATANSTKPNSSNPTPRV) show a composition bias toward polar residues. The segment covering 796 to 826 (TPPATSQPPSSKDVDSPVSGTTSGANTAGST) has biased composition (low complexity). The segment covering 832–845 (GGPGPSSGAVGGKG) has biased composition (gly residues). The span at 863 to 875 (SSMSMQRPATASS) shows a compositional bias: polar residues. Over residues 892–918 (SMDIDSPDSTSSIDGPRPFGSSAGLSS) the composition is skewed to low complexity.

Its subcellular location is the nucleus. Functionally, major nitrogen regulatory protein. Positively acting regulatory gene of nitrogen metabolite repression. This chain is Nitrogen regulatory protein areA (AREA), found in Fusarium fujikuroi (Bakanae and foot rot disease fungus).